The chain runs to 347 residues: Dihydroorotate dehydrogenase (quinone) (347 aa).

FMN contacts are provided by residues 61 to 65 (AGLDK) and Thr85. Lys65 serves as a coordination point for substrate. 110–114 (NRMGF) is a substrate binding site. Residues Asn138 and Asn171 each coordinate FMN. A substrate-binding site is contributed by Asn171. The active-site Nucleophile is the Ser174. Asn176 is a substrate binding site. Residues Lys216 and Thr244 each contribute to the FMN site. 245-246 (NT) provides a ligand contact to substrate. FMN is bound by residues Gly267, Gly296, and 317-318 (YT).

The protein belongs to the dihydroorotate dehydrogenase family. Type 2 subfamily. In terms of assembly, monomer. It depends on FMN as a cofactor.

Its subcellular location is the cell membrane. It catalyses the reaction (S)-dihydroorotate + a quinone = orotate + a quinol. It functions in the pathway pyrimidine metabolism; UMP biosynthesis via de novo pathway; orotate from (S)-dihydroorotate (quinone route): step 1/1. Functionally, catalyzes the conversion of dihydroorotate to orotate with quinone as electron acceptor. This is Dihydroorotate dehydrogenase (quinone) from Azotobacter vinelandii (strain DJ / ATCC BAA-1303).